The chain runs to 396 residues: 1-deoxy-D-xylulose 5-phosphate reductoisomerase (396 aa).

Residues Thr-10, Gly-11, Ser-12, Ile-13, Asn-38, and Asn-123 each contribute to the NADPH site. Lys-124 is a 1-deoxy-D-xylulose 5-phosphate binding site. Glu-125 is a binding site for NADPH. Asp-149 provides a ligand contact to Mn(2+). Residues Ser-150, Glu-151, Ser-185, and His-208 each coordinate 1-deoxy-D-xylulose 5-phosphate. Glu-151 contacts Mn(2+). Gly-214 contacts NADPH. 1-deoxy-D-xylulose 5-phosphate contacts are provided by Ser-221, Asn-226, Lys-227, and Glu-230. Mn(2+) is bound at residue Glu-230.

It belongs to the DXR family. The cofactor is Mg(2+). Requires Mn(2+) as cofactor.

It catalyses the reaction 2-C-methyl-D-erythritol 4-phosphate + NADP(+) = 1-deoxy-D-xylulose 5-phosphate + NADPH + H(+). Its pathway is isoprenoid biosynthesis; isopentenyl diphosphate biosynthesis via DXP pathway; isopentenyl diphosphate from 1-deoxy-D-xylulose 5-phosphate: step 1/6. Catalyzes the NADPH-dependent rearrangement and reduction of 1-deoxy-D-xylulose-5-phosphate (DXP) to 2-C-methyl-D-erythritol 4-phosphate (MEP). The protein is 1-deoxy-D-xylulose 5-phosphate reductoisomerase of Shewanella halifaxensis (strain HAW-EB4).